Consider the following 170-residue polypeptide: Ribosome maturation factor RimM (170 aa).

One can recognise a PRC barrel domain in the interval 95–168; sequence EDAYYYHEIV…IIKVQLMEGM (74 aa).

The protein belongs to the RimM family. Binds ribosomal protein uS19.

Its subcellular location is the cytoplasm. Its function is as follows. An accessory protein needed during the final step in the assembly of 30S ribosomal subunit, possibly for assembly of the head region. Essential for efficient processing of 16S rRNA. May be needed both before and after RbfA during the maturation of 16S rRNA. It has affinity for free ribosomal 30S subunits but not for 70S ribosomes. This Oceanobacillus iheyensis (strain DSM 14371 / CIP 107618 / JCM 11309 / KCTC 3954 / HTE831) protein is Ribosome maturation factor RimM.